We begin with the raw amino-acid sequence, 304 residues long: Methionyl-tRNA formyltransferase (304 aa).

(6S)-5,6,7,8-tetrahydrofolate is bound at residue 106 to 109 (SLLP).

Belongs to the Fmt family.

The catalysed reaction is L-methionyl-tRNA(fMet) + (6R)-10-formyltetrahydrofolate = N-formyl-L-methionyl-tRNA(fMet) + (6S)-5,6,7,8-tetrahydrofolate + H(+). Attaches a formyl group to the free amino group of methionyl-tRNA(fMet). The formyl group appears to play a dual role in the initiator identity of N-formylmethionyl-tRNA by promoting its recognition by IF2 and preventing the misappropriation of this tRNA by the elongation apparatus. This is Methionyl-tRNA formyltransferase from Thermosipho africanus (strain TCF52B).